Reading from the N-terminus, the 279-residue chain is HTH-type transcriptional regulator HdfR (279 aa).

Residues 1-58 form the HTH lysR-type domain; that stretch reads MDTELLKTFLEVSRTRHFGRAAESLYLTQSAVSFRIRQLENQLGVNLFTRHRNNIRLT. Positions 18-37 form a DNA-binding region, H-T-H motif; the sequence is FGRAAESLYLTQSAVSFRIR.

It belongs to the LysR transcriptional regulatory family.

Its function is as follows. Negatively regulates the transcription of the flagellar master operon flhDC by binding to the upstream region of the operon. This Escherichia coli O6:K15:H31 (strain 536 / UPEC) protein is HTH-type transcriptional regulator HdfR.